We begin with the raw amino-acid sequence, 198 residues long: Protein GrpE (198 aa).

This sequence belongs to the GrpE family. As to quaternary structure, homodimer.

Its subcellular location is the cytoplasm. In terms of biological role, participates actively in the response to hyperosmotic and heat shock by preventing the aggregation of stress-denatured proteins, in association with DnaK and GrpE. It is the nucleotide exchange factor for DnaK and may function as a thermosensor. Unfolded proteins bind initially to DnaJ; upon interaction with the DnaJ-bound protein, DnaK hydrolyzes its bound ATP, resulting in the formation of a stable complex. GrpE releases ADP from DnaK; ATP binding to DnaK triggers the release of the substrate protein, thus completing the reaction cycle. Several rounds of ATP-dependent interactions between DnaJ, DnaK and GrpE are required for fully efficient folding. The polypeptide is Protein GrpE (Baumannia cicadellinicola subsp. Homalodisca coagulata).